Consider the following 162-residue polypeptide: Caveolin-2 (162 aa).

The Cytoplasmic segment spans residues 1–86 (MGLETEKADV…FEISKYVIYK (86 aa)). Tyrosine 19 is modified (phosphotyrosine; by SRC). 2 positions are modified to phosphoserine: serine 20 and serine 23. Residue tyrosine 27 is modified to Phosphotyrosine; by SRC. Phosphoserine is present on serine 36. The segment at residues 87-107 (FLTFFLAIPMAFAAGILFAIL) is an intramembrane region (helical). Residues 108–162 (SCLHIWIIMPFVKTCLMVLPSVQTIWKTITDVVIAPLCTSVGRSFSSISLQLSHD) are Cytoplasmic-facing.

It belongs to the caveolin family. As to quaternary structure, monomer or homodimer. Interacts with CAV1; the interaction forms a stable heterooligomeric complex that is required for targeting to lipid rafts and for caveolae formation. Tyrosine phosphorylated forms do not form heterooligomers with the Tyr-19-phosphorylated form existing as a monomer or dimer, and the Tyr-27-form as a monomer only. Interacts (tyrosine phosphorylated form) with the SH2 domain-containing proteins, RASA1, NCK1 and SRC. Interacts (tyrosine phosphorylated form) with INSR, the interaction (Tyr-27-phosphorylated form) is increased on insulin stimulation. Interacts (Tyr-19 phosphorylated form) with MAPK1 (phosphorylated form); the interaction, promoted by insulin, leads to nuclear location and MAPK1 activation. Interacts with STAT3; the interaction is increased on insulin-induced tyrosine phosphorylation leading to STAT activation. Post-translationally, phosphorylated on serine and tyrosine residues. CAV1 promotes phosphorylation on Ser-23 which then targets the complex to the plasma membrane, lipid rafts and caveolae. Phosphorylation on Ser-36 appears to modulate mitosis in endothelial cells. Phosphorylation on both Tyr-19 and Tyr-27 is required for insulin-induced 'Ser-727' phosphorylation of STAT3 and its activation. Phosphorylation on Tyr-19 is required for insulin-induced phosphorylation of MAPK1 and DNA binding of STAT3. Tyrosine phosphorylation is induced by both EGF and insulin (By. similarity).

It is found in the nucleus. It localises to the cytoplasm. The protein resides in the golgi apparatus membrane. Its subcellular location is the cell membrane. The protein localises to the membrane. It is found in the caveola. Its function is as follows. May act as a scaffolding protein within caveolar membranes. Interacts directly with G-protein alpha subunits and can functionally regulate their activity. Acts as an accessory protein in conjunction with CAV1 in targeting to lipid rafts and driving caveolae formation. The Ser-36 phosphorylated form has a role in modulating mitosis in endothelial cells. Positive regulator of cellular mitogenesis of the MAPK signaling pathway. Required for the insulin-stimulated nuclear translocation and activation of MAPK1 and STAT3, and the subsequent regulation of cell cycle progression. This Mustela putorius furo (European domestic ferret) protein is Caveolin-2 (CAV2).